A 741-amino-acid chain; its full sequence is Phosphoribosylformylglycinamidine synthase subunit PurL (741 aa).

The active site involves H53. ATP is bound by residues Y56 and K95. Mg(2+) is bound at residue E97. Substrate is bound by residues 98–101 (SHNH) and R120. H99 functions as the Proton acceptor in the catalytic mechanism. D121 contacts Mg(2+). Q244 contributes to the substrate binding site. Mg(2+) is bound at residue D274. Substrate is bound at residue 318–320 (ESQ). ATP is bound by residues D501 and G538. A Mg(2+)-binding site is contributed by N539. Position 541 (S541) interacts with substrate.

Belongs to the FGAMS family. As to quaternary structure, monomer. Part of the FGAM synthase complex composed of 1 PurL, 1 PurQ and 2 PurS subunits.

Its subcellular location is the cytoplasm. It carries out the reaction N(2)-formyl-N(1)-(5-phospho-beta-D-ribosyl)glycinamide + L-glutamine + ATP + H2O = 2-formamido-N(1)-(5-O-phospho-beta-D-ribosyl)acetamidine + L-glutamate + ADP + phosphate + H(+). It participates in purine metabolism; IMP biosynthesis via de novo pathway; 5-amino-1-(5-phospho-D-ribosyl)imidazole from N(2)-formyl-N(1)-(5-phospho-D-ribosyl)glycinamide: step 1/2. Part of the phosphoribosylformylglycinamidine synthase complex involved in the purines biosynthetic pathway. Catalyzes the ATP-dependent conversion of formylglycinamide ribonucleotide (FGAR) and glutamine to yield formylglycinamidine ribonucleotide (FGAM) and glutamate. The FGAM synthase complex is composed of three subunits. PurQ produces an ammonia molecule by converting glutamine to glutamate. PurL transfers the ammonia molecule to FGAR to form FGAM in an ATP-dependent manner. PurS interacts with PurQ and PurL and is thought to assist in the transfer of the ammonia molecule from PurQ to PurL. The polypeptide is Phosphoribosylformylglycinamidine synthase subunit PurL (Limosilactobacillus fermentum (strain NBRC 3956 / LMG 18251) (Lactobacillus fermentum)).